The primary structure comprises 394 residues: Protein BUR2 (394 aa).

Disordered stretches follow at residues 1–32 and 372–394; these read MVLS…GNPQ and MSER…KPRF. Positions 9–32 are enriched in polar residues; sequence IANSQPSGNGKTSLDIKQNEGNPQ. The segment covering 372-381 has biased composition (basic and acidic residues); it reads MSERSIKRPS.

In terms of assembly, belongs to the BUR kinase complex.

It localises to the nucleus. Its function is as follows. Component of the BUR kinase complex involved in transcription regulation. This complex phosphorylates the UBC2/RAD6 ubiquitin-conjugating enzyme (E2), leading to monoubiquitination of histone H2B and the silencing of telomeric-associated genes. Also required for histone H3 methylation. Necessary for the recovery from pheromone-induced growth arrest in the cell cycle G1 phase. The kinase activity of the complex requires the presence of BUR2. Overexpression of BUR2 interferes with mitotic chromosome segregation. The protein is Protein BUR2 (BUR2) of Kluyveromyces lactis (strain ATCC 8585 / CBS 2359 / DSM 70799 / NBRC 1267 / NRRL Y-1140 / WM37) (Yeast).